A 228-amino-acid polypeptide reads, in one-letter code: Octanoyltransferase (228 aa).

Positions 31–212 constitute a BPL/LPL catalytic domain; that stretch reads GETDGILILL…KFSEVFGIHF (182 aa). Substrate is bound by residues 76 to 83, 143 to 145, and 156 to 158; these read RGGKITFH, AIG, and GIA. Cys-174 functions as the Acyl-thioester intermediate in the catalytic mechanism.

Belongs to the LipB family.

Its subcellular location is the cytoplasm. It carries out the reaction octanoyl-[ACP] + L-lysyl-[protein] = N(6)-octanoyl-L-lysyl-[protein] + holo-[ACP] + H(+). It functions in the pathway protein modification; protein lipoylation via endogenous pathway; protein N(6)-(lipoyl)lysine from octanoyl-[acyl-carrier-protein]: step 1/2. Functionally, catalyzes the transfer of endogenously produced octanoic acid from octanoyl-acyl-carrier-protein onto the lipoyl domains of lipoate-dependent enzymes. Lipoyl-ACP can also act as a substrate although octanoyl-ACP is likely to be the physiological substrate. The sequence is that of Octanoyltransferase from Thermoanaerobacter sp. (strain X514).